A 267-amino-acid polypeptide reads, in one-letter code: MAQVSMKQLLEAGVHFGHQTKRWNPKMKPYIFGARNGIYIIDLQKTVRYFKSAYQFIRETVQNGDKVLFVGTKKQAQEAIREETARADQFYIDNRWLGGMLTNFATIKKSIERLKKIEVMAQDGTYELLTKKEALNLEREREKLEKTLGGIKGMNKLPGAIFVIDPKKETIAVKEARKLGIPVVAVVDTNCDPDDIDYIIPGNDDAIRAIRLFAAKMADACIDGAQAREAAIRAESDKAETDKVEVEGKGEAPAAEAAEVVESADKA.

Over residues 233 to 250 (RAESDKAETDKVEVEGKG) the composition is skewed to basic and acidic residues. The disordered stretch occupies residues 233-267 (RAESDKAETDKVEVEGKGEAPAAEAAEVVESADKA). Positions 251 to 261 (EAPAAEAAEVV) are enriched in low complexity.

The protein belongs to the universal ribosomal protein uS2 family.

In Syntrophotalea carbinolica (strain DSM 2380 / NBRC 103641 / GraBd1) (Pelobacter carbinolicus), this protein is Small ribosomal subunit protein uS2.